Reading from the N-terminus, the 89-residue chain is Small ribosomal subunit protein uS15 (89 aa).

Belongs to the universal ribosomal protein uS15 family. Part of the 30S ribosomal subunit. Forms a bridge to the 50S subunit in the 70S ribosome, contacting the 23S rRNA.

Its function is as follows. One of the primary rRNA binding proteins, it binds directly to 16S rRNA where it helps nucleate assembly of the platform of the 30S subunit by binding and bridging several RNA helices of the 16S rRNA. In terms of biological role, forms an intersubunit bridge (bridge B4) with the 23S rRNA of the 50S subunit in the ribosome. In Geobacillus stearothermophilus (Bacillus stearothermophilus), this protein is Small ribosomal subunit protein uS15.